The primary structure comprises 549 residues: Cytochrome bc1 complex cytochrome b subunit (549 aa).

Residues 45–65 (FLLGEIALYSFVVLLITGVYL) traverse the membrane as a helical segment. Residues H114 and H128 each contribute to the heme site. 3 helical membrane passes run 118-138 (ALMF…TGAF), 146-166 (WVIG…GYSL), and 189-209 (VIGT…TILI). Heme contacts are provided by H216 and H231. 5 helical membrane-spanning segments follow: residues 217 to 237 (ILLL…LVWF), 266 to 286 (SGAF…LLQI), 335 to 355 (PVWV…YPFL), 381 to 401 (IGAM…NDII), and 418 to 438 (IGMV…CIGL).

This sequence belongs to the cytochrome b family. As to quaternary structure, the cytochrome bc1 complex is composed of a cytochrome b (QcrB), the Rieske iron-sulfur protein (QcrA) and a diheme cytochrome c (QcrC) subunit. Heme is required as a cofactor.

Its subcellular location is the cell membrane. The enzyme catalyses a quinol + 2 Fe(III)-[cytochrome c](out) = a quinone + 2 Fe(II)-[cytochrome c](out) + 2 H(+)(out). Cytochrome b subunit of the cytochrome bc1 complex, an essential component of the respiratory electron transport chain required for ATP synthesis. The bc1 complex catalyzes the oxidation of ubiquinol and the reduction of cytochrome c in the respiratory chain. The bc1 complex operates through a Q-cycle mechanism that couples electron transfer to generation of the proton gradient that drives ATP synthesis. The cytochrome b subunit contains two ubiquinol reactive sites: the oxidation (QP) site and the reduction (QN) site. This chain is Cytochrome bc1 complex cytochrome b subunit (qcrB), found in Mycobacterium bovis (strain ATCC BAA-935 / AF2122/97).